The following is an 870-amino-acid chain: Leucine--tRNA ligase (870 aa).

A 'HIGH' region motif is present at residues 42–52 (PYPSGKLHMGH). A 'KMSKS' region motif is present at residues 629-633 (KMSKS). Lysine 632 contacts ATP.

Belongs to the class-I aminoacyl-tRNA synthetase family.

It localises to the cytoplasm. It carries out the reaction tRNA(Leu) + L-leucine + ATP = L-leucyl-tRNA(Leu) + AMP + diphosphate. This is Leucine--tRNA ligase from Dechloromonas aromatica (strain RCB).